We begin with the raw amino-acid sequence, 375 residues long: Probable Na(+)/H(+) antiporter GerT (375 aa).

The next 10 membrane-spanning stretches (helical) occupy residues Pro27–Ile47, Ala89–Ile109, His112–Leu132, Thr145–Met165, Ile183–Met203, Leu204–Phe224, Tyr226–Ile246, Pro261–Phe281, Leu288–Leu308, and Glu350–Leu370.

The protein belongs to the monovalent cation:proton antiporter 2 (CPA2) transporter (TC 2.A.37) family.

It is found in the membrane. Functionally, contributes to the success of spore outgrowth from the germinated state during alkaline or Na(+) stress. Does not have a significant role in germination. This chain is Probable Na(+)/H(+) antiporter GerT (gerT), found in Bacillus cereus.